The following is a 362-amino-acid chain: dTDP-glucose 4,6-dehydratase (362 aa).

NAD(+) is bound by residues 11–12, 32–35, 58–59, 80–84, and Thr-99; these read FI, DKLT, DI, and LAAES. Ser-84 is a substrate binding site. Thr-133 provides a ligand contact to substrate. Asp-134 (proton donor) is an active-site residue. Residues Glu-135 and Tyr-167 each act as proton acceptor in the active site. 167-171 is an NAD(+) binding site; it reads YSASK. Asn-196 contacts substrate. Asn-197 is an NAD(+) binding site. Residues 206–207, 222–224, Arg-231, Asn-266, and 300–304 each bind substrate; these read KL, PVY, and DRPGH.

It belongs to the NAD(P)-dependent epimerase/dehydratase family. dTDP-glucose dehydratase subfamily. The cofactor is NAD(+).

It catalyses the reaction dTDP-alpha-D-glucose = dTDP-4-dehydro-6-deoxy-alpha-D-glucose + H2O. The protein operates within bacterial outer membrane biogenesis; LPS O-antigen biosynthesis. Its function is as follows. Catalyzes the dehydration of dTDP-D-glucose to form dTDP-4-dehydro-6-deoxy-D-glucose via a three-step process involving oxidation, dehydration and reduction. This reaction is a step in the biosynthesis of D-fucofuranose, a component of E.coli O52 O antigen. The protein is dTDP-glucose 4,6-dehydratase (rmlB) of Escherichia coli.